The following is a 191-amino-acid chain: Inosine triphosphate pyrophosphatase (191 aa).

Position 15–20 (15–20 (TGNANK)) interacts with ITP. E43 contacts Mg(2+). ITP is bound by residues K55, 71–72 (DT), K88, 147–150 (FGWD), K168, and 173–174 (HR).

This sequence belongs to the HAM1 NTPase family. Homodimer. Mg(2+) serves as cofactor. It depends on Mn(2+) as a cofactor.

The protein resides in the cytoplasm. It localises to the nucleus. It carries out the reaction ITP + H2O = IMP + diphosphate + H(+). The enzyme catalyses dITP + H2O = dIMP + diphosphate + H(+). The catalysed reaction is XTP + H2O = XMP + diphosphate + H(+). Functionally, pyrophosphatase that hydrolyzes non-canonical purine nucleotides such as inosine triphosphate (ITP), deoxyinosine triphosphate (dITP) or xanthosine 5'-triphosphate (XTP) to their respective monophosphate derivatives. The enzyme does not distinguish between the deoxy- and ribose forms. Probably excludes non-canonical purines from RNA and DNA precursor pools, thus preventing their incorporation into RNA and DNA and avoiding chromosomal lesions. The chain is Inosine triphosphate pyrophosphatase from Neurospora crassa (strain ATCC 24698 / 74-OR23-1A / CBS 708.71 / DSM 1257 / FGSC 987).